The sequence spans 172 residues: uncharacterized protein (172 aa).

The segment covering 147–159 has biased composition (gly residues); sequence AGSGSGSGSGSGS. The interval 147 to 172 is disordered; it reads AGSGSGSGSGSGSDTGPFKKSQYKIL.

This is an uncharacterized protein from Homo sapiens (Human).